The sequence spans 356 residues: Uroporphyrinogen decarboxylase (356 aa).

Substrate contacts are provided by residues 27-31, Asp77, Tyr154, Thr209, and His327; that span reads RQAGR.

Belongs to the uroporphyrinogen decarboxylase family. In terms of assembly, homodimer.

It localises to the cytoplasm. The catalysed reaction is uroporphyrinogen III + 4 H(+) = coproporphyrinogen III + 4 CO2. It functions in the pathway porphyrin-containing compound metabolism; protoporphyrin-IX biosynthesis; coproporphyrinogen-III from 5-aminolevulinate: step 4/4. Catalyzes the decarboxylation of four acetate groups of uroporphyrinogen-III to yield coproporphyrinogen-III. The sequence is that of Uroporphyrinogen decarboxylase from Hahella chejuensis (strain KCTC 2396).